An 85-amino-acid chain; its full sequence is UPF0297 protein Cbei_1105 (85 aa).

The protein belongs to the UPF0297 family.

In Clostridium beijerinckii (strain ATCC 51743 / NCIMB 8052) (Clostridium acetobutylicum), this protein is UPF0297 protein Cbei_1105.